The chain runs to 477 residues: D-alanyl-D-alanine carboxypeptidase DacB (477 aa).

Residues 1 to 20 form the signal peptide; that stretch reads MRFSRFIIGLTSCIAFSVQA. Ser-62 serves as the catalytic Acyl-ester intermediate. The active-site Proton acceptor is Lys-65. The segment at 90-263 is absent in class-A beta-lactamases; the sequence is GNVENGVLKG…YAGAILKDEL (174 aa). Ser-306 is an active-site residue. Position 417 (Lys-417) interacts with substrate.

The protein belongs to the peptidase S13 family.

Its subcellular location is the periplasm. It catalyses the reaction Preferential cleavage: (Ac)2-L-Lys-D-Ala-|-D-Ala. Also transpeptidation of peptidyl-alanyl moieties that are N-acyl substituents of D-alanine.. The protein operates within cell wall biogenesis; peptidoglycan biosynthesis. Not involved in transpeptidation but exclusively catalyzes a DD-carboxypeptidase and DD-endopeptidase reaction. The polypeptide is D-alanyl-D-alanine carboxypeptidase DacB (dacB) (Escherichia coli (strain K12)).